We begin with the raw amino-acid sequence, 259 residues long: Cobalt-precorrin-4 C(11)-methyltransferase (259 aa).

The protein belongs to the precorrin methyltransferase family.

The catalysed reaction is Co-precorrin-4 + S-adenosyl-L-methionine = Co-precorrin-5A + S-adenosyl-L-homocysteine + H(+). The protein operates within cofactor biosynthesis; adenosylcobalamin biosynthesis; cob(II)yrinate a,c-diamide from sirohydrochlorin (anaerobic route): step 4/10. Its function is as follows. Catalyzes the methylation of C-11 in cobalt-precorrin-4 to form cobalt-precorrin-5A. This Methanocaldococcus jannaschii (strain ATCC 43067 / DSM 2661 / JAL-1 / JCM 10045 / NBRC 100440) (Methanococcus jannaschii) protein is Cobalt-precorrin-4 C(11)-methyltransferase (cbiF).